Here is a 330-residue protein sequence, read N- to C-terminus: tRNA U34 carboxymethyltransferase (330 aa).

Carboxy-S-adenosyl-L-methionine is bound by residues K91, W105, K110, G130, 152–154 (DPS), 181–182 (IE), M196, Y200, and R315.

The protein belongs to the class I-like SAM-binding methyltransferase superfamily. CmoB family. As to quaternary structure, homotetramer.

It catalyses the reaction carboxy-S-adenosyl-L-methionine + 5-hydroxyuridine(34) in tRNA = 5-carboxymethoxyuridine(34) in tRNA + S-adenosyl-L-homocysteine + H(+). Functionally, catalyzes carboxymethyl transfer from carboxy-S-adenosyl-L-methionine (Cx-SAM) to 5-hydroxyuridine (ho5U) to form 5-carboxymethoxyuridine (cmo5U) at position 34 in tRNAs. The protein is tRNA U34 carboxymethyltransferase of Shewanella denitrificans (strain OS217 / ATCC BAA-1090 / DSM 15013).